The chain runs to 135 residues: Holo-[acyl-carrier-protein] synthase (135 aa).

Mg(2+) contacts are provided by Asp8 and Glu58.

This sequence belongs to the P-Pant transferase superfamily. AcpS family. Mg(2+) is required as a cofactor.

It is found in the cytoplasm. It catalyses the reaction apo-[ACP] + CoA = holo-[ACP] + adenosine 3',5'-bisphosphate + H(+). In terms of biological role, transfers the 4'-phosphopantetheine moiety from coenzyme A to a Ser of acyl-carrier-protein. The sequence is that of Holo-[acyl-carrier-protein] synthase from Leuconostoc citreum (strain KM20).